The following is a 327-amino-acid chain: Urease accessory protein UreD (327 aa).

It belongs to the UreD family. UreD, UreF and UreG form a complex that acts as a GTP-hydrolysis-dependent molecular chaperone, activating the urease apoprotein by helping to assemble the nickel containing metallocenter of UreC. The UreE protein probably delivers the nickel.

The protein localises to the cytoplasm. In terms of biological role, required for maturation of urease via the functional incorporation of the urease nickel metallocenter. The chain is Urease accessory protein UreD from Yersinia enterocolitica serotype O:8 / biotype 1B (strain NCTC 13174 / 8081).